Here is a 260-residue protein sequence, read N- to C-terminus: Small ribosomal subunit protein uS2 (260 aa).

This sequence belongs to the universal ribosomal protein uS2 family.

In Roseobacter denitrificans (strain ATCC 33942 / OCh 114) (Erythrobacter sp. (strain OCh 114)), this protein is Small ribosomal subunit protein uS2.